The chain runs to 330 residues: Phosphate acyltransferase (330 aa).

Belongs to the PlsX family. In terms of assembly, homodimer. Probably interacts with PlsY.

It localises to the cytoplasm. It catalyses the reaction a fatty acyl-[ACP] + phosphate = an acyl phosphate + holo-[ACP]. Its pathway is lipid metabolism; phospholipid metabolism. In terms of biological role, catalyzes the reversible formation of acyl-phosphate (acyl-PO(4)) from acyl-[acyl-carrier-protein] (acyl-ACP). This enzyme utilizes acyl-ACP as fatty acyl donor, but not acyl-CoA. This Bacillus cereus (strain G9842) protein is Phosphate acyltransferase.